We begin with the raw amino-acid sequence, 227 residues long: MICOS complex subunit Mic19 (227 aa).

Gly-2 carries N-myristoyl glycine lipidation. Ser-29 is subject to Phosphoserine. Residues 32-57 (VIDRMKESSPSGSKSQRYSSVYGASV) form a disordered region. Over residues 39 to 50 (SSPSGSKSQRYS) the composition is skewed to polar residues. Tyr-49 carries the post-translational modification Phosphotyrosine. Phosphoserine occurs at positions 50, 51, 56, and 58. The interval 73-92 (EQAKKESEHQRRLKQARDLE) is disordered. The residue at position 142 (Lys-142) is an N6-acetyllysine. The CHCH domain maps to 180-222 (HPVCADLQTKILQCYRQNTQQTLSCSALASQYMHCVNHAKQSM). 2 consecutive short sequence motifs (cx9C motif) follow at residues 183 to 193 (CADLQTKILQC) and 204 to 214 (CSALASQYMHC). 2 disulfide bridges follow: Cys-183-Cys-214 and Cys-193-Cys-204.

The protein belongs to the MICOS complex subunit Mic19 family. Metazoan Mic19 subfamily. As to quaternary structure, component of the mitochondrial contact site and cristae organizing system (MICOS) complex, composed of at least MICOS10/MIC10, CHCHD3/MIC19, CHCHD6/MIC25, APOOL/MIC27, IMMT/MIC60, APOO/MIC23/MIC26 and MICOS13/MIC13. This complex was also known under the names MINOS or MitOS complex. The MICOS complex associates with mitochondrial outer membrane proteins SAMM50, MTX1 and MTX2 (together described as components of the mitochondrial outer membrane sorting assembly machinery (SAM) complex) and DNAJC11, mitochondrial inner membrane protein TMEM11 and with HSPA9. The MICOS and SAM complexes together with DNAJC11 are part of a large protein complex spanning both membranes termed the mitochondrial intermembrane space bridging (MIB) complex. Interacts with HSPA1A/HSPA1B and OPA1, preferentially with the soluble OPA1 form.

It localises to the mitochondrion inner membrane. It is found in the cytoplasm. The protein localises to the nucleus. The protein resides in the mitochondrion. Functionally, component of the MICOS complex, a large protein complex of the mitochondrial inner membrane that plays crucial roles in the maintenance of crista junctions, inner membrane architecture, and formation of contact sites to the outer membrane. Has also been shown to function as a transcription factor which binds to the BAG1 promoter and represses BAG1 transcription. Plays an important role in the maintenance of the MICOS complex stability and the mitochondrial cristae morphology. The sequence is that of MICOS complex subunit Mic19 (Chchd3) from Mus musculus (Mouse).